We begin with the raw amino-acid sequence, 1471 residues long: MGARSSVLSGKKTDELEKVRLRPGGKKRYCLKHIIWAVNELDRFGLAESLLESKEGCHKILTVLAPLVPTGSENLKSLFNTVCVIYCLHAEEKVKDTEEAKKIAQRHLAADTEKMPATSRPTAPPSGGNYPVQQIAGNYVHMPLSPRTLNAWVKLVEEKKFGAEVVPGFQALSEGCTPYDINQMLNCVGDHQAAMQIIREIINEEAADWDQQHPIPGPLPAGQLRDPRGSDIAGTTSTVEEQIQWMYRAQNPVPVGNIYRRWIQIGLQKCVRMYNPTNILDIKQGPKEPFQSYVDRFYKSLRAEQTDPAVKNWMTQTLLIQNANPDCKLVLKGLGMNPTLEEMLTACQGIGGPGQKARLMAEALKEALTPAPIPFAAAQQKAGKRGTVTCWNCGKVGHTAKQCRAPRRQGCWKCGKQGHIMSKCPERQAGFLRVRTLGKEASQLPHDPSASGSDTICTPDGPSRGHDTSGGDTICAPCRSSSGDAEKLHEDGETAEREPRETLQGGDRGFAAPQFSLWRRPVVRACIEGQPVEVLLDTGADDSIVAGIELGSNYTPKIVGGIGGFINTKEYKDVEIEVVGKRVRATIMTGDTPINIFGRNILNTLGMTLNFPVAKIEPVKVKLKPGKDGPKIRQWPLSKEKILALKEICEKMEKEGQLEEAPPTNPYNTPTFAIKKRDKNKWRMLIDFRELNKVTQDFTEVQLGIPHPAGLAEKRRITVLDVGDAYFSIPLDPNFRQYTAFTLPSINNAEPGKRYIYKVLPQGWKGSPAIFQYSMRKVLDPFRKANSDVIIIQYMDDILIASDRSDLEHDRVVSQLKELLNDMGFSTPEEKFQKDPPFKWMGYELWPKRWKLQKIQLPEKEVWTVNDIQKLVGVLNWAAQLFPGIKTRHICKLIRGKMTLTEEVQWTELAEAELQENKIILEQEQEGSYYKEGVPLEATVQKNLANQWTYKIHQGNRILKVGKYAKVKNTHTNGVRLLAHVVQKIGKEALVIWGEIPVFHLPVERETWDQWWTDYWQVTWIPEWDFVSTPPLVRLAYNLVKDPLEKVETYYTDGSCNRASKEGKAGYVTDRGKDKVKVLEQTTNQQAELEAFALALQDSGPQVNIIVDSQYVMGIVAGQPTETESPLVNQIIEEMIKKEAIYVGWVPAHRGLGGNQEVDHLVSQGIRQVLFLEKIEPAQEEHEKYHGNVKELVHKFGLPQLVAKQIVNSCDKCQQKGEAVHGQVNAELGTWQMDCTHLEGKVIIVAVHVASGFIEAEVIPQETGRQTALFLLKLASRWPITHLHTDNGANFTSQDVKMAAWWIGIEQTFGVPYNPQSQGVVEAMNHHLKNQIDRIRDQAVSIETVVLMAAHCMNFKRRGGIGDMTPAERLVNMITTEQEIQFFQAKNLKFQNFQVYYREGRDQLWKGPGELLWKGEGAVLIKVGTEIKVIPRRKAKIIRHYGGGKELDCGTDMEDTRQAREMAQSGQVPEA.

Residue Gly-2 is the site of N-myristoyl glycine; by host attachment. An interaction with Gp41 region spans residues 7-31; the sequence is VLSGKKTDELEKVRLRPGGKKRYCL. The short motif at 16 to 22 is the Nuclear export signal element; the sequence is LEKVRLR. Positions 26–32 match the Nuclear localization signal motif; the sequence is KKRYCLK. Over residues 105 to 114 the composition is skewed to basic and acidic residues; sequence QRHLAADTEK. The interval 105–130 is disordered; sequence QRHLAADTEKMPATSRPTAPPSGGNY. Tyr-130 bears the Phosphotyrosine; by host mark. The segment at 186–223 is interaction with human PPIA/CYPA and NUP153; the sequence is NCVGDHQAAMQIIREIINEEAADWDQQHPIPGPLPAGQ. The interval 274–360 is dimerization/Multimerization of capsid protein p24; the sequence is YNPTNILDIK…GGPGQKARLM (87 aa). 2 CCHC-type zinc fingers span residues 388–405 and 409–426; these read VTCWNCGKVGHTAKQCRA and QGCWKCGKQGHIMSKCPE. The tract at residues 441-508 is disordered; the sequence is ASQLPHDPSA…PRETLQGGDR (68 aa). The segment covering 484 to 501 has biased composition (basic and acidic residues); sequence DAEKLHEDGETAEREPRE. The dimerization of protease stretch occupies residues 513–517; it reads PQFSL. The Peptidase A2 domain occupies 533–602; sequence EVLLDTGADD…PINIFGRNIL (70 aa). Asp-537 functions as the For protease activity; shared with dimeric partner in the catalytic mechanism. 2 dimerization of protease regions span residues 561-567 and 600-612; these read GIGGFIN and NILNTLGMTLNFP. Residues 656 to 846 form the Reverse transcriptase domain; sequence GQLEEAPPTN…PFKWMGYELW (191 aa). The Mg(2+) site is built by Asp-721, Asp-796, and Asp-797. The tract at residues 838–846 is RT 'primer grip'; the sequence is FKWMGYELW. Positions 1008-1024 match the Tryptophan repeat motif motif; sequence WDQWWTDYWQVTWIPEW. One can recognise an RNase H type-1 domain in the interval 1044 to 1167; the sequence is LEKVETYYTD…VDHLVSQGIR (124 aa). The Mg(2+) site is built by Asp-1053, Glu-1088, Asp-1108, and Asp-1159. Residues 1173 to 1214 form an Integrase-type zinc finger; sequence EKIEPAQEEHEKYHGNVKELVHKFGLPQLVAKQIVNSCDKCQ. Zn(2+) is bound by residues His-1182, His-1186, Cys-1210, and Cys-1213. The Integrase catalytic domain maps to 1224-1375; sequence VNAELGTWQM…PAERLVNMIT (152 aa). Mg(2+)-binding residues include Asp-1234, Asp-1286, and Glu-1322. Residues 1393–1440 constitute a DNA-binding region (integrase-type); the sequence is FQVYYREGRDQLWKGPGELLWKGEGAVLIKVGTEIKVIPRRKAKIIRH.

In terms of assembly, homotrimer; further assembles as hexamers of trimers. Interacts with gp41 (via C-terminus). Interacts with host CALM1; this interaction induces a conformational change in the Matrix protein, triggering exposure of the myristate group. Interacts with host AP3D1; this interaction allows the polyprotein trafficking to multivesicular bodies during virus assembly. Part of the pre-integration complex (PIC) which is composed of viral genome, matrix protein, Vpr and integrase. As to quaternary structure, homodimer; the homodimer further multimerizes as homohexamers or homopentamers. Interacts with human PPIA/CYPA. Interacts with human NUP153. Interacts with host PDZD8; this interaction stabilizes the capsid. Interacts with monkey TRIM5; this interaction destabilizes the capsid. Homodimer, whose active site consists of two apposed aspartic acid residues. In terms of assembly, heterodimer of p66 RT and p51 RT (RT p66/p51). Heterodimerization of RT is essential for DNA polymerase activity. The overall folding of the subdomains is similar in p66 RT and p51 RT but the spatial arrangements of the subdomains are dramatically different. As to quaternary structure, homotetramer; may further associate as a homohexadecamer. Part of the pre-integration complex (PIC) which is composed of viral genome, matrix protein, Vpr and integrase. Interacts with human SMARCB1/INI1 and human PSIP1/LEDGF isoform 1. Interacts with human KPNA3; this interaction might play a role in nuclear import of the pre-integration complex. Interacts with human NUP153; this interaction might play a role in nuclear import of the pre-integration complex. It depends on Mg(2+) as a cofactor. Post-translationally, specific enzymatic cleavages by the viral protease yield mature proteins. The protease is released by autocatalytic cleavage. The polyprotein is cleaved during and after budding, this process is termed maturation. Proteolytic cleavage of p66 RT removes the RNase H domain to yield the p51 RT subunit. Nucleocapsid protein p7 might be further cleaved after virus entry.

It localises to the host cell membrane. The protein localises to the host endosome. It is found in the host multivesicular body. Its subcellular location is the virion membrane. The protein resides in the host nucleus. It localises to the host cytoplasm. The protein localises to the virion. The catalysed reaction is Endopeptidase for which the P1 residue is preferably hydrophobic.. It catalyses the reaction Endohydrolysis of RNA in RNA/DNA hybrids. Three different cleavage modes: 1. sequence-specific internal cleavage of RNA. Human immunodeficiency virus type 1 and Moloney murine leukemia virus enzymes prefer to cleave the RNA strand one nucleotide away from the RNA-DNA junction. 2. RNA 5'-end directed cleavage 13-19 nucleotides from the RNA end. 3. DNA 3'-end directed cleavage 15-20 nucleotides away from the primer terminus.. It carries out the reaction 3'-end directed exonucleolytic cleavage of viral RNA-DNA hybrid.. The enzyme catalyses DNA(n) + a 2'-deoxyribonucleoside 5'-triphosphate = DNA(n+1) + diphosphate. Protease: The viral protease is inhibited by many synthetic protease inhibitors (PIs), such as amprenavir, atazanavir, indinavir, loprinavir, nelfinavir, ritonavir and saquinavir. Use of protease inhibitors in tritherapy regimens permit more ambitious therapeutic strategies. Reverse transcriptase/ribonuclease H: RT can be inhibited either by nucleoside RT inhibitors (NRTIs) or by non nucleoside RT inhibitors (NNRTIs). NRTIs act as chain terminators, whereas NNRTIs inhibit DNA polymerization by binding a small hydrophobic pocket near the RT active site and inducing an allosteric change in this region. Classical NRTIs are abacavir, adefovir (PMEA), didanosine (ddI), lamivudine (3TC), stavudine (d4T), tenofovir (PMPA), zalcitabine (ddC), and zidovudine (AZT). Classical NNRTIs are atevirdine (BHAP U-87201E), delavirdine, efavirenz (DMP-266), emivirine (I-EBU), and nevirapine (BI-RG-587). The tritherapies used as a basic effective treatment of AIDS associate two NRTIs and one NNRTI. Functionally, mediates, with Gag polyprotein, the essential events in virion assembly, including binding the plasma membrane, making the protein-protein interactions necessary to create spherical particles, recruiting the viral Env proteins, and packaging the genomic RNA via direct interactions with the RNA packaging sequence (Psi). Gag-Pol polyprotein may regulate its own translation, by the binding genomic RNA in the 5'-UTR. At low concentration, the polyprotein would promote translation, whereas at high concentration, the polyprotein would encapsidate genomic RNA and then shut off translation. Its function is as follows. Targets the polyprotein to the plasma membrane via a multipartite membrane-binding signal, that includes its myristoylated N-terminus. Matrix protein is part of the pre-integration complex. Implicated in the release from host cell mediated by Vpu. Binds to RNA. Forms the conical core that encapsulates the genomic RNA-nucleocapsid complex in the virion. Most core are conical, with only 7% tubular. The core is constituted by capsid protein hexamer subunits. The core is disassembled soon after virion entry. Host restriction factors such as TRIM5-alpha or TRIMCyp bind retroviral capsids and cause premature capsid disassembly, leading to blocks in reverse transcription. Capsid restriction by TRIM5 is one of the factors which restricts HIV-1 to the human species. Host PIN1 apparently facilitates the virion uncoating. On the other hand, interactions with PDZD8 or CYPA stabilize the capsid. In terms of biological role, encapsulates and protects viral dimeric unspliced genomic RNA (gRNA). Binds these RNAs through its zinc fingers. Acts as a nucleic acid chaperone which is involved in rearangement of nucleic acid secondary structure during gRNA retrotranscription. Also facilitates template switch leading to recombination. As part of the polyprotein, participates in gRNA dimerization, packaging, tRNA incorporation and virion assembly. Functionally, aspartyl protease that mediates proteolytic cleavages of Gag and Gag-Pol polyproteins during or shortly after the release of the virion from the plasma membrane. Cleavages take place as an ordered, step-wise cascade to yield mature proteins. This process is called maturation. Displays maximal activity during the budding process just prior to particle release from the cell. Also cleaves Nef and Vif, probably concomitantly with viral structural proteins on maturation of virus particles. Hydrolyzes host EIF4GI and PABP1 in order to shut off the capped cellular mRNA translation. The resulting inhibition of cellular protein synthesis serves to ensure maximal viral gene expression and to evade host immune response. Its function is as follows. Multifunctional enzyme that converts the viral RNA genome into dsDNA in the cytoplasm, shortly after virus entry into the cell. This enzyme displays a DNA polymerase activity that can copy either DNA or RNA templates, and a ribonuclease H (RNase H) activity that cleaves the RNA strand of RNA-DNA heteroduplexes in a partially processive 3' to 5' endonucleasic mode. Conversion of viral genomic RNA into dsDNA requires many steps. A tRNA(3)-Lys binds to the primer-binding site (PBS) situated at the 5'-end of the viral RNA. RT uses the 3' end of the tRNA primer to perform a short round of RNA-dependent minus-strand DNA synthesis. The reading proceeds through the U5 region and ends after the repeated (R) region which is present at both ends of viral RNA. The portion of the RNA-DNA heteroduplex is digested by the RNase H, resulting in a ssDNA product attached to the tRNA primer. This ssDNA/tRNA hybridizes with the identical R region situated at the 3' end of viral RNA. This template exchange, known as minus-strand DNA strong stop transfer, can be either intra- or intermolecular. RT uses the 3' end of this newly synthesized short ssDNA to perform the RNA-dependent minus-strand DNA synthesis of the whole template. RNase H digests the RNA template except for two polypurine tracts (PPTs) situated at the 5'-end and near the center of the genome. It is not clear if both polymerase and RNase H activities are simultaneous. RNase H probably can proceed both in a polymerase-dependent (RNA cut into small fragments by the same RT performing DNA synthesis) and a polymerase-independent mode (cleavage of remaining RNA fragments by free RTs). Secondly, RT performs DNA-directed plus-strand DNA synthesis using the PPTs that have not been removed by RNase H as primers. PPTs and tRNA primers are then removed by RNase H. The 3' and 5' ssDNA PBS regions hybridize to form a circular dsDNA intermediate. Strand displacement synthesis by RT to the PBS and PPT ends produces a blunt ended, linear dsDNA copy of the viral genome that includes long terminal repeats (LTRs) at both ends. Catalyzes viral DNA integration into the host chromosome, by performing a series of DNA cutting and joining reactions. This enzyme activity takes place after virion entry into a cell and reverse transcription of the RNA genome in dsDNA. The first step in the integration process is 3' processing. This step requires a complex comprising the viral genome, matrix protein, Vpr and integrase. This complex is called the pre-integration complex (PIC). The integrase protein removes 2 nucleotides from each 3' end of the viral DNA, leaving recessed CA OH's at the 3' ends. In the second step, the PIC enters cell nucleus. This process is mediated through integrase and Vpr proteins, and allows the virus to infect a non dividing cell. This ability to enter the nucleus is specific of lentiviruses, other retroviruses cannot and rely on cell division to access cell chromosomes. In the third step, termed strand transfer, the integrase protein joins the previously processed 3' ends to the 5' ends of strands of target cellular DNA at the site of integration. The 5'-ends are produced by integrase-catalyzed staggered cuts, 5 bp apart. A Y-shaped, gapped, recombination intermediate results, with the 5'-ends of the viral DNA strands and the 3' ends of target DNA strands remaining unjoined, flanking a gap of 5 bp. The last step is viral DNA integration into host chromosome. This involves host DNA repair synthesis in which the 5 bp gaps between the unjoined strands are filled in and then ligated. Since this process occurs at both cuts flanking the HIV genome, a 5 bp duplication of host DNA is produced at the ends of HIV-1 integration. Alternatively, Integrase may catalyze the excision of viral DNA just after strand transfer, this is termed disintegration. The chain is Gag-Pol polyprotein (gag-pol) from Human immunodeficiency virus type 2 subtype B (isolate UC1) (HIV-2).